A 368-amino-acid chain; its full sequence is Ferrochelatase (368 aa).

Residues His209 and Glu290 each contribute to the Fe cation site. Residues 347-368 (REEQEQQAHISREEARRLGADQ) form a disordered region.

The protein belongs to the ferrochelatase family.

Its subcellular location is the cytoplasm. It catalyses the reaction heme b + 2 H(+) = protoporphyrin IX + Fe(2+). Its pathway is porphyrin-containing compound metabolism; protoheme biosynthesis; protoheme from protoporphyrin-IX: step 1/1. Its function is as follows. Catalyzes the ferrous insertion into protoporphyrin IX. This Janthinobacterium sp. (strain Marseille) (Minibacterium massiliensis) protein is Ferrochelatase.